The chain runs to 208 residues: FMN-dependent NADH:quinone oxidoreductase (208 aa).

Residue 99-102 (MWNF) coordinates FMN.

Belongs to the azoreductase type 1 family. As to quaternary structure, homodimer. Requires FMN as cofactor.

The catalysed reaction is 2 a quinone + NADH + H(+) = 2 a 1,4-benzosemiquinone + NAD(+). It carries out the reaction N,N-dimethyl-1,4-phenylenediamine + anthranilate + 2 NAD(+) = 2-(4-dimethylaminophenyl)diazenylbenzoate + 2 NADH + 2 H(+). Functionally, quinone reductase that provides resistance to thiol-specific stress caused by electrophilic quinones. Also exhibits azoreductase activity. Catalyzes the reductive cleavage of the azo bond in aromatic azo compounds to the corresponding amines. The protein is FMN-dependent NADH:quinone oxidoreductase of Brevibacillus brevis (strain 47 / JCM 6285 / NBRC 100599).